A 54-amino-acid chain; its full sequence is uncharacterized protein (54 aa).

An N-terminal signal peptide occupies residues 1 to 21 (MNSKQILSLSAFAMTIATAAA). The Extracellular portion of the chain corresponds to 22 to 29 (GNWNAGDT). A helical membrane pass occupies residues 30-50 (IALLIGIAMFFVLLLALLGWI). The Cytoplasmic segment spans residues 51 to 54 (SRKK).

The protein resides in the membrane. This is an uncharacterized protein from Dictyostelium discoideum (Social amoeba).